Reading from the N-terminus, the 116-residue chain is Protein Rev (116 aa).

2 positions are modified to phosphoserine; by host CK2: S5 and S8. The interval 18 to 26 (LIKFLYQSN) is homomultimerization. The segment at 23–49 (YQSNPPPNPEGTRQARRNRRRRWRERQ) is disordered. Residues 34 to 50 (TRQARRNRRRRWRERQR) carry the Nuclear localization signal and RNA-binding (RRE) motif. Positions 36 to 47 (QARRNRRRRWRE) are enriched in basic residues. The Nuclear export signal and binding to XPO1 signature appears at 73–84 (LQLPPLERLTLD). A phosphoserine; by host mark is found at S92 and S99.

It belongs to the HIV-1 REV protein family. Homomultimer; when bound to the RRE. Multimeric assembly is essential for activity and may involve XPO1. Binds to human KPNB1, XPO1, TNPO1, RANBP5 and IPO7. Interacts with the viral Integrase. Interacts with human KHDRBS1. Interacts with human NAP1; this interaction decreases Rev multimerization and stimulates its activity. Interacts with human DEAD-box helicases DDX3 and DDX24; these interactions may serve for viral RNA export to the cytoplasm and packaging, respectively. Interacts with human PSIP1; this interaction may inhibit HIV-1 DNA integration by promoting dissociation of the Integrase-LEDGF/p75 complex. In terms of processing, asymmetrically arginine dimethylated at one site by host PRMT6. Methylation impairs the RNA-binding activity and export of viral RNA from the nucleus to the cytoplasm. Post-translationally, phosphorylated by protein kinase CK2. Presence of, and maybe binding to the N-terminus of the regulatory beta subunit of CK2 is necessary for CK2-mediated Rev's phosphorylation.

The protein resides in the host nucleus. It localises to the host nucleolus. It is found in the host cytoplasm. Functionally, escorts unspliced or incompletely spliced viral pre-mRNAs (late transcripts) out of the nucleus of infected cells. These pre-mRNAs carry a recognition sequence called Rev responsive element (RRE) located in the env gene, that is not present in fully spliced viral mRNAs (early transcripts). This function is essential since most viral proteins are translated from unspliced or partially spliced pre-mRNAs which cannot exit the nucleus by the pathway used by fully processed cellular mRNAs. Rev itself is translated from a fully spliced mRNA that readily exits the nucleus. Rev's nuclear localization signal (NLS) binds directly to KPNB1/Importin beta-1 without previous binding to KPNA1/Importin alpha-1. KPNB1 binds to the GDP bound form of RAN (Ran-GDP) and targets Rev to the nucleus. In the nucleus, the conversion from Ran-GDP to Ran-GTP dissociates Rev from KPNB1 and allows Rev's binding to the RRE in viral pre-mRNAs. Rev multimerization on the RRE via cooperative assembly exposes its nuclear export signal (NES) to the surface. Rev can then form a complex with XPO1/CRM1 and Ran-GTP, leading to nuclear export of the complex. Conversion from Ran-GTP to Ran-GDP mediates dissociation of the Rev/RRE/XPO1/RAN complex, so that Rev can return to the nucleus for a subsequent round of export. Beside KPNB1, also seems to interact with TNPO1/Transportin-1, RANBP5/IPO5 and IPO7/RANBP7 for nuclear import. The nucleoporin-like HRB/RIP is an essential cofactor that probably indirectly interacts with Rev to release HIV RNAs from the perinuclear region to the cytoplasm. This is Protein Rev from Human immunodeficiency virus type 1 group M subtype B (isolate PCV12) (HIV-1).